The following is a 208-amino-acid chain: Orotidine 5'-phosphate decarboxylase (208 aa).

Substrate is bound by residues aspartate 7, lysine 29, aspartate 57–threonine 66, serine 109, proline 162–lysine 172, glycine 185, and arginine 186. Residue lysine 59 is the Proton donor of the active site.

The protein belongs to the OMP decarboxylase family. Type 1 subfamily. As to quaternary structure, homodimer.

The catalysed reaction is orotidine 5'-phosphate + H(+) = UMP + CO2. Its pathway is pyrimidine metabolism; UMP biosynthesis via de novo pathway; UMP from orotate: step 2/2. Its function is as follows. Catalyzes the decarboxylation of orotidine 5'-monophosphate (OMP) to uridine 5'-monophosphate (UMP). This Pyrococcus horikoshii (strain ATCC 700860 / DSM 12428 / JCM 9974 / NBRC 100139 / OT-3) protein is Orotidine 5'-phosphate decarboxylase (pyrF).